The chain runs to 223 residues: MAEHADTQALLRLVTWLSPAFPVGSFSYSGGLEQAIHQGLVTSADDLRLWCETLLERGNTWNDALLLSESYRAYGDAQRLIAVSELAEALAGSRERHMETMLLGEAFLAAAGHWPHPSLAVLGTKAAYPVSVGAVAGAHRTGLKPALAAFLNATVSNAVSVAIRCGITGQRDGVGVLARVEDTIGAVVARAAAASLEDLGGATFIAEIASLKHENLHSRLFRS.

This sequence belongs to the UreF family. UreD, UreF and UreG form a complex that acts as a GTP-hydrolysis-dependent molecular chaperone, activating the urease apoprotein by helping to assemble the nickel containing metallocenter of UreC. The UreE protein probably delivers the nickel.

The protein localises to the cytoplasm. Its function is as follows. Required for maturation of urease via the functional incorporation of the urease nickel metallocenter. This Sinorhizobium medicae (strain WSM419) (Ensifer medicae) protein is Urease accessory protein UreF.